A 180-amino-acid chain; its full sequence is Pro-glucagon (180 aa).

The N-terminal stretch at 1-20 (MKSIYFVAGLFVMLVQGSWQ) is a signal peptide. Residues 26-56 (TEEKSRSFSAPQTEPLNDLDQMNEDKRHSQG) form a disordered region. Ser-54 bears the Phosphoserine mark. Residues 84-89 (NKNNIA) constitute a propeptide that is removed on maturation. Ser-105 and Ser-108 each carry phosphoserine. An Arginine amide modification is found at Arg-127. Residues 131–145 (DFPEEVAIVEEFRRR) constitute a propeptide that is removed on maturation. A phosphoserine mark is found at Ser-150 and Ser-152.

It belongs to the glucagon family. Post-translationally, proglucagon is post-translationally processed in a tissue-specific manner in pancreatic A cells and intestinal L cells. In pancreatic A cells, the major bioactive hormone is glucagon cleaved by PCSK2/PC2. In the intestinal L cells PCSK1/PC1 liberates GLP-1, GLP-2, glicentin and oxyntomodulin. GLP-1 is further N-terminally truncated by post-translational processing in the intestinal L cells resulting in GLP-1(7-37) GLP-1-(7-36)amide. The C-terminal amidation is neither important for the metabolism of GLP-1 nor for its effects on the endocrine pancreas. In terms of tissue distribution, glucagon is secreted in the A cells of the islets of Langerhans. GLP-1, GLP-2, oxyntomodulin and glicentin are secreted from enteroendocrine cells throughout the gastrointestinal tract. GLP-1 and GLP-2 are also secreted in selected neurons in the brain.

It localises to the secreted. Its function is as follows. Plays a key role in glucose metabolism and homeostasis. Regulates blood glucose by increasing gluconeogenesis and decreasing glycolysis. A counterregulatory hormone of insulin, raises plasma glucose levels in response to insulin-induced hypoglycemia. Plays an important role in initiating and maintaining hyperglycemic conditions in diabetes. Potent stimulator of glucose-dependent insulin release. Also stimulates insulin release in response to IL6. Plays important roles on gastric motility and the suppression of plasma glucagon levels. May be involved in the suppression of satiety and stimulation of glucose disposal in peripheral tissues, independent of the actions of insulin. Has growth-promoting activities on intestinal epithelium. May also regulate the hypothalamic pituitary axis (HPA) via effects on LH, TSH, CRH, oxytocin, and vasopressin secretion. Increases islet mass through stimulation of islet neogenesis and pancreatic beta cell proliferation. Inhibits beta cell apoptosis. Functionally, stimulates intestinal growth and up-regulates villus height in the small intestine, concomitant with increased crypt cell proliferation and decreased enterocyte apoptosis. The gastrointestinal tract, from the stomach to the colon is the principal target for GLP-2 action. Plays a key role in nutrient homeostasis, enhancing nutrient assimilation through enhanced gastrointestinal function, as well as increasing nutrient disposal. Stimulates intestinal glucose transport and decreases mucosal permeability. In terms of biological role, significantly reduces food intake. Inhibits gastric emptying in humans. Suppression of gastric emptying may lead to increased gastric distension, which may contribute to satiety by causing a sensation of fullness. Its function is as follows. May modulate gastric acid secretion and the gastro-pyloro-duodenal activity. May play an important role in intestinal mucosal growth in the early period of life. The protein is Pro-glucagon (GCG) of Canis lupus familiaris (Dog).